We begin with the raw amino-acid sequence, 589 residues long: MTISSAHPETEPKWWKEATIYQIYPASFKDSNNDGWGDMKGIASKLEYIKELGTDAIWISPFYDSPQDDMGYDIANYEKVWPTYGTNEDCFALIEKTHKLGMKFITDLVINHCSSEHEWFKESRSSKTNPKRDWFFWRPPKGYDAEGKPIPPNNWRSYFGGSAWTFDEKTQEFYLRLFCSTQPDLNWENEDCRKAIYESAVGYWLDHGVDGFRIDVGSLYSKVAGLPDAPVIDENSKWQLSDPFTMNGPRIHEFHQEMNKFIRNRVKDGREIMTVGEMRHATDETKRLYTSASRHELSELFNFSHTDVGTSPKFRQNLIPYELKDWKVALAELFRYVNGTDCWSTIYLENHDQPRSITRFGDDSPKNRVISGKLLSVLLVSLSGTLYVYQGQELGEINFKNWPIEKYEDVEVRNNYDAIKEEHGENSKEMKRFLEAIALISRDHARTPMQWSREEPNAGFSGPNAKPWFYLNESFREGINAEDESKDPNSVLNFWKEALRFRKAHKDITVYGYDFEFIDLDNKKLFSFTKKYDNKTLFAALNFSSDSIDFTIPNNSSSFKLEFGNYPRSEVDASSRTLKPWEGRIYISE.

Asp-215 (nucleophile) is an active-site residue. Residue Glu-277 is the Proton donor of the active site.

It belongs to the glycosyl hydrolase 13 family.

It localises to the cytoplasm. The enzyme catalyses Hydrolysis of (1-&gt;6)-alpha-D-glucosidic linkages in some oligosaccharides produced from starch and glycogen by alpha-amylase, and in isomaltose.. In terms of biological role, alpha-glucosidase with broad substrate specificity for alpha-1,4- and alpha-1,6-glucosides. Not required for isomaltose utilization, but overexpression allows the IMA1 null mutant to grow on isomaltose. The chain is Oligo-1,6-glucosidase IMA3 (IMA3) from Saccharomyces cerevisiae (strain ATCC 204508 / S288c) (Baker's yeast).